We begin with the raw amino-acid sequence, 245 residues long: Fibroblast growth factor 13 (245 aa).

Residues 1–36 are disordered; sequence MAAAIASSLIRQKRQAREREKSNACKCVSSPSKGKT. The tract at residues 1-62 is mediates targeting to the nucleus; sequence MAAAIASSLI…GSKKRRRRRP (62 aa). The interval 67-201 is mediates interaction with sodium channels; that stretch reads KGIVTKLYSR…AHFLPKPLKV (135 aa). Positions 157 to 164 are tubulin-binding domain necessary and sufficient for tubulin-binding; it reads SMIYRQQQ. Residue Ser-208 is modified to Phosphoserine. The interval 213 to 245 is disordered; sequence TEFSRSGSGTPTKSRSVSGVLNGGKSMSHNEST. Residues 215 to 245 show a composition bias toward polar residues; sequence FSRSGSGTPTKSRSVSGVLNGGKSMSHNEST.

The protein belongs to the heparin-binding growth factors family. As to quaternary structure, interacts with SCN8A; regulates SCN8A activity. Interacts with SCN1A; may regulate SCN1A activity. Interacts with SCN5A; the interaction is direct and may regulate SNC5A density at membranes and function. May also interact with SCN2A and SCN11A. Interacts with MAPK8IP2; may regulate the MAPK8IP2 scaffolding activity. May be phosphorylated. Detected in brain, eye and heart. In brain, the different isoforms display different patterns of expression. Expressed in brain and heart (at protein level). Isoform 3 is highly expressed in cardiac myocytes while isoform 1 is the most abundant in brain.

The protein localises to the cell projection. Its subcellular location is the filopodium. It is found in the growth cone. It localises to the dendrite. The protein resides in the cell membrane. The protein localises to the sarcolemma. Its subcellular location is the cytoplasm. It is found in the nucleus. Its function is as follows. Microtubule-binding protein which directly binds tubulin and is involved in both polymerization and stabilization of microtubules. Through its action on microtubules, may participate to the refinement of axons by negatively regulating axonal and leading processes branching. Plays a crucial role in neuron polarization and migration in the cerebral cortex and the hippocampus. Regulates voltage-gated sodium channel transport and function. May also play a role in MAPK signaling. Required for the development of axonal initial segment-targeting inhibitory GABAergic synapses made by chandelier neurons. In terms of biological role, seems not to be involved in neuroblast polarization and migration but regulates axon branching. The chain is Fibroblast growth factor 13 from Mus musculus (Mouse).